A 438-amino-acid polypeptide reads, in one-letter code: uncharacterized protein (438 aa).

Histidine 59 lines the Zn(2+) pocket. The active-site Proton acceptor is glutamate 62. Zn(2+)-binding residues include histidine 63 and glutamate 139.

It belongs to the peptidase M16 family. Zn(2+) serves as cofactor.

This is an uncharacterized protein from Mycobacterium bovis (strain ATCC BAA-935 / AF2122/97).